Consider the following 165-residue polypeptide: Trypsin alpha-3 (165 aa).

The Peptidase S1 domain maps to 1–163 (NSGGVLVSVA…LRSWVVSAAN (163 aa)). Asp-26 functions as the Charge relay system in the catalytic mechanism. 2 cysteine pairs are disulfide-bonded: Cys-89–Cys-106 and Cys-115–Cys-139. Residue Ser-119 is the Charge relay system of the active site.

The protein belongs to the peptidase S1 family.

The protein resides in the secreted. It localises to the extracellular space. The enzyme catalyses Preferential cleavage: Arg-|-Xaa, Lys-|-Xaa.. The polypeptide is Trypsin alpha-3 (Lucilia cuprina (Green bottle fly)).